The chain runs to 1416 residues: DNA-directed RNA polymerase subunit beta (1416 aa).

Residues 1388-1416 form a disordered region; that stretch reads AKAAREQAEGELGGPLGTPRGAAAEKNTA.

The protein belongs to the RNA polymerase beta chain family. In terms of assembly, the RNAP catalytic core consists of 2 alpha, 1 beta, 1 beta' and 1 omega subunit. When a sigma factor is associated with the core the holoenzyme is formed, which can initiate transcription.

The catalysed reaction is RNA(n) + a ribonucleoside 5'-triphosphate = RNA(n+1) + diphosphate. DNA-dependent RNA polymerase catalyzes the transcription of DNA into RNA using the four ribonucleoside triphosphates as substrates. The sequence is that of DNA-directed RNA polymerase subunit beta from Anaeromyxobacter sp. (strain Fw109-5).